A 525-amino-acid polypeptide reads, in one-letter code: MSKNIHKHRILILDFGSQYTQLIARRVREIGVYCELWAWDVTEEQIREFNPDGIILSGGPESVTESDSPRAPEYVFNAGVPVLGVCYGMQTMAEQLGGKVESSDKREFGYAKVKLVKDSELFHNIEDAITEDGRPELDVWMSHGDKVMEIPVDFVTIAVTPTCPHAAMANEAKRFYGVQFHPEVTHTVQGARMLERFVKEICHCEALWTPATIIEDAVARIREQVGTDEVILGLSGGVDSSVVAMLIHRAVGKQLTCVFVDNGLLRLNEGQQVMEMFGDHFGLNIIKVDAEERFLSALKGIADPELKRKAIGRVFVEVFDDESKKLKNAKWLAQGTIYPDVIESAASKTGKAHVIKSHHNVGGLPDDMKMGLVEPLRELFKDEVRRVGLELGLPYNMLYRHPFPGPGLGVRVLGEVKKEYCDLLRRADAIFIEELHNADLYNKVSQAFTVFLPVRSVGVMGDGRKYDWVVSLRAVETIDFMTAHWAHLPYDFLGHVSNRIINEINGISRVVYDISGKPPATIEWE.

Positions 9–207 constitute a Glutamine amidotransferase type-1 domain; it reads RILILDFGSQ…VKEICHCEAL (199 aa). Cys-86 (nucleophile) is an active-site residue. Catalysis depends on residues His-181 and Glu-183. In terms of domain architecture, GMPS ATP-PPase spans 208–400; it reads WTPATIIEDA…LGLPYNMLYR (193 aa). 235–241 provides a ligand contact to ATP; it reads SGGVDSS.

As to quaternary structure, homodimer.

The enzyme catalyses XMP + L-glutamine + ATP + H2O = GMP + L-glutamate + AMP + diphosphate + 2 H(+). Its pathway is purine metabolism; GMP biosynthesis; GMP from XMP (L-Gln route): step 1/1. In terms of biological role, catalyzes the synthesis of GMP from XMP. This Tolumonas auensis (strain DSM 9187 / NBRC 110442 / TA 4) protein is GMP synthase [glutamine-hydrolyzing].